The sequence spans 194 residues: Isopentenyl-diphosphate Delta-isomerase (194 aa).

Residues H23 and H30 each coordinate Mn(2+). In terms of domain architecture, Nudix hydrolase spans 28–162; the sequence is PLHLAFSCYV…TTDISPWCRQ (135 aa). The active site involves C65. Position 67 (H67) interacts with Mn(2+). Residue E85 participates in Mg(2+) binding. Residues E112 and E114 each coordinate Mn(2+). Residue E114 is part of the active site.

It belongs to the IPP isomerase type 1 family. Requires Mg(2+) as cofactor. The cofactor is Mn(2+).

It localises to the cytoplasm. The catalysed reaction is isopentenyl diphosphate = dimethylallyl diphosphate. Its pathway is isoprenoid biosynthesis; dimethylallyl diphosphate biosynthesis; dimethylallyl diphosphate from isopentenyl diphosphate: step 1/1. Functionally, catalyzes the 1,3-allylic rearrangement of the homoallylic substrate isopentenyl (IPP) to its highly electrophilic allylic isomer, dimethylallyl diphosphate (DMAPP). The chain is Isopentenyl-diphosphate Delta-isomerase from Saccharopolyspora erythraea (strain ATCC 11635 / DSM 40517 / JCM 4748 / NBRC 13426 / NCIMB 8594 / NRRL 2338).